The following is a 338-amino-acid chain: Protein-glutamate methylesterase/protein-glutamine glutaminase 2 (338 aa).

The Response regulatory domain maps to 2 to 119 (RIGIVNDSAL…SDTKLAAGPL (118 aa)). At aspartate 53 the chain carries 4-aspartylphosphate. The 186-residue stretch at 145 to 330 (PTPTAPRLVA…PLQKIAPRLV (186 aa)) folds into the CheB-type methylesterase domain. Catalysis depends on residues serine 158, histidine 185, and aspartate 278.

This sequence belongs to the CheB family. Post-translationally, phosphorylated by CheA. Phosphorylation of the N-terminal regulatory domain activates the methylesterase activity.

Its subcellular location is the cytoplasm. It carries out the reaction [protein]-L-glutamate 5-O-methyl ester + H2O = L-glutamyl-[protein] + methanol + H(+). The enzyme catalyses L-glutaminyl-[protein] + H2O = L-glutamyl-[protein] + NH4(+). In terms of biological role, involved in chemotaxis. Part of a chemotaxis signal transduction system that modulates chemotaxis in response to various stimuli. Catalyzes the demethylation of specific methylglutamate residues introduced into the chemoreceptors (methyl-accepting chemotaxis proteins or MCP) by CheR. Also mediates the irreversible deamidation of specific glutamine residues to glutamic acid. In Cupriavidus metallidurans (strain ATCC 43123 / DSM 2839 / NBRC 102507 / CH34) (Ralstonia metallidurans), this protein is Protein-glutamate methylesterase/protein-glutamine glutaminase 2.